The following is a 215-amino-acid chain: UPF0323 lipoprotein HP_0232 (215 aa).

The N-terminal stretch at 1-27 (MKKPYRKISDYAIVGGLSALVMVSIVG) is a signal peptide. Residue cysteine 28 is the site of N-palmitoyl cysteine attachment. Cysteine 28 carries the S-diacylglycerol cysteine lipid modification. Residues 158-169 (QRTYKSPQAYQR) are compositionally biased toward polar residues. Positions 158–215 (QRTYKSPQAYQRSQNSFSKSAPSASSMGGASKGQSGFFGSSRPTSSPAVSSGTRGFNS) are disordered. Residues 170–208 (SQNSFSKSAPSASSMGGASKGQSGFFGSSRPTSSPAVSS) are compositionally biased toward low complexity.

It belongs to the UPF0323 family.

It is found in the cell membrane. This Helicobacter pylori (strain ATCC 700392 / 26695) (Campylobacter pylori) protein is UPF0323 lipoprotein HP_0232.